The following is a 396-amino-acid chain: Alanine racemase (396 aa).

Lysine 46 serves as the catalytic Proton acceptor; specific for D-alanine. Lysine 46 is subject to N6-(pyridoxal phosphate)lysine. Arginine 145 lines the substrate pocket. Tyrosine 280 functions as the Proton acceptor; specific for L-alanine in the catalytic mechanism. Methionine 328 contacts substrate.

It belongs to the alanine racemase family. The cofactor is pyridoxal 5'-phosphate.

It carries out the reaction L-alanine = D-alanine. It functions in the pathway amino-acid biosynthesis; D-alanine biosynthesis; D-alanine from L-alanine: step 1/1. Functionally, catalyzes the interconversion of L-alanine and D-alanine. May also act on other amino acids. The polypeptide is Alanine racemase (alr) (Brucella suis (strain ATCC 23445 / NCTC 10510)).